A 367-amino-acid chain; its full sequence is Tetraacyldisaccharide 4'-kinase (367 aa).

Position 68-75 (68-75 (VLGGSGKT)) interacts with ATP.

This sequence belongs to the LpxK family.

The catalysed reaction is a lipid A disaccharide + ATP = a lipid IVA + ADP + H(+). The protein operates within glycolipid biosynthesis; lipid IV(A) biosynthesis; lipid IV(A) from (3R)-3-hydroxytetradecanoyl-[acyl-carrier-protein] and UDP-N-acetyl-alpha-D-glucosamine: step 6/6. Functionally, transfers the gamma-phosphate of ATP to the 4'-position of a tetraacyldisaccharide 1-phosphate intermediate (termed DS-1-P) to form tetraacyldisaccharide 1,4'-bis-phosphate (lipid IVA). This chain is Tetraacyldisaccharide 4'-kinase, found in Chlamydia caviae (strain ATCC VR-813 / DSM 19441 / 03DC25 / GPIC) (Chlamydophila caviae).